The sequence spans 670 residues: Outer dynein arm-docking complex subunit 1 (670 aa).

3 coiled-coil regions span residues 9–155 (SKEV…RYLN), 183–224 (AVRE…EQLH), and 302–381 (NFIN…IQLL). The segment at 454-473 (KMAPLQPPDTLEDPPGFEAS) is disordered. Ser517 is modified (phosphoserine). Disordered stretches follow at residues 526 to 596 (AGSS…ASSG) and 616 to 670 (VGSS…DSRG). Polar residues predominate over residues 584–596 (GHVTFGSTSASSG). Positions 650–670 (SSTGPASSTGPGSSTSKDSRG) are enriched in low complexity.

Belongs to the ODA1/DCC2 family. In terms of assembly, component of the outer dynein arm-docking complex along with ODAD2, ODAD3, ODAD4 and CLXN. Interacts with ODAD3. Interacts with ODAD4; this interaction may facilitate the recruitment and/or attachment of outer dynein arm docking complex proteins, including ODAD1, ODAD3, and ODAD4 to ciliary axonemes. Interacts with DNAH9. Interacts with MNS1. Interacts with PIERCE1 and PIERCE2; the interactions link the outer dynein arms docking complex (ODA-DC) to the internal microtubule inner proteins (MIP) in cilium axoneme. As to expression, expressed in nasal epithelial cells. Highly expressed in testis and also detected in lung, brain and kidney.

It localises to the cytoplasm. It is found in the cytoskeleton. The protein resides in the cilium axoneme. Its function is as follows. Component of the outer dynein arm-docking complex (ODA-DC) that mediates outer dynein arms (ODA) binding onto the doublet microtubule. Involved in mediating assembly of both ODAs and their axonemal docking complex onto ciliary microtubules. The sequence is that of Outer dynein arm-docking complex subunit 1 from Homo sapiens (Human).